Here is a 102-residue protein sequence, read N- to C-terminus: Small ribosomal subunit protein uS10 (102 aa).

Belongs to the universal ribosomal protein uS10 family. In terms of assembly, part of the 30S ribosomal subunit.

Its function is as follows. Involved in the binding of tRNA to the ribosomes. This is Small ribosomal subunit protein uS10 from Dehalococcoides mccartyi (strain ATCC BAA-2100 / JCM 16839 / KCTC 5957 / BAV1).